We begin with the raw amino-acid sequence, 364 residues long: DNA replication and repair protein RecF (364 aa).

30-37 contributes to the ATP binding site; that stretch reads GNNAQGKT.

This sequence belongs to the RecF family.

The protein localises to the cytoplasm. The RecF protein is involved in DNA metabolism; it is required for DNA replication and normal SOS inducibility. RecF binds preferentially to single-stranded, linear DNA. It also seems to bind ATP. The chain is DNA replication and repair protein RecF from Clostridium botulinum (strain ATCC 19397 / Type A).